Consider the following 677-residue polypeptide: MTQVAKKILVTCALPYANGSIHLGHMLEHIQADVWVRYQRMRGHEVNFICADDAHGTPIMLKAQQLGITPEQMIGEMSQEHQTDFAGFNISYDNYHSTHSEENRQLSELIYTRLKENGFIKNRTISQLYDPEKGMFLPDRFVKGTCPKCKSPDQYGDNCEVCGATYSPTELIEPKSVVSGATPVMRDSEHFFFDLPSFSEMLQAWTRSGALQEQVANKMQEWFESGLQQWDISRDAPYFGFEIPNAPGKYFYVWLDAPIGYMGSFKNLCDKRGDSVSFDEYWKKDSTAELYHFIGKDIVYFHSLFWPAMLEGSNFRKPTNLFVHGYVTVNGAKMSKSRGTFIKASTWLNHFDADSLRYYYTAKLSSRIDDIDLNLEDFVQRVNADIVNKVVNLASRNAGFINKRFDGVLASELADPQLYKTFTDAAEVIGEAWESREFGKAVREIMALADLANRYVDEQAPWVVAKQEGRDADLQAICSMGINLFRVLMTYLKPVLPKLTERAEAFLNTELTWDGIQQPLLGHKVNPFKALYNRIDMKQVEALVEASKEEVKAAAAPVTGPLADDPIQETITFDDFAKVDLRVALIENAEFVEGSDKLLRLTLDLGGEKRNVFSGIRSAYPDPQALIGRHTIMVANLAPRKMRFGISEGMVMAAGPGGKDIFLLSPDAGAKPGHQVK.

A 'HIGH' region motif is present at residues Pro-15–His-25. Residues Cys-146, Cys-149, Cys-159, and Cys-162 each contribute to the Zn(2+) site. Residues Lys-333 to Ser-337 carry the 'KMSKS' region motif. Lys-336 contributes to the ATP binding site. The tRNA-binding domain occupies Asp-575 to Lys-677.

The protein belongs to the class-I aminoacyl-tRNA synthetase family. MetG type 1 subfamily. Homodimer. Zn(2+) is required as a cofactor.

It localises to the cytoplasm. It carries out the reaction tRNA(Met) + L-methionine + ATP = L-methionyl-tRNA(Met) + AMP + diphosphate. Is required not only for elongation of protein synthesis but also for the initiation of all mRNA translation through initiator tRNA(fMet) aminoacylation. This Escherichia coli O157:H7 protein is Methionine--tRNA ligase.